A 153-amino-acid polypeptide reads, in one-letter code: Ribonuclease HI (153 aa).

Residues 1 to 141 form the RNase H type-1 domain; it reads MKSVNIFTDG…CDELAKLGAN (141 aa). Mg(2+) is bound by residues Asp-9, Glu-47, Asp-69, and Asp-133.

This sequence belongs to the RNase H family. As to quaternary structure, monomer. Mg(2+) is required as a cofactor.

It is found in the cytoplasm. It catalyses the reaction Endonucleolytic cleavage to 5'-phosphomonoester.. In terms of biological role, endonuclease that specifically degrades the RNA of RNA-DNA hybrids. In Haemophilus ducreyi (strain 35000HP / ATCC 700724), this protein is Ribonuclease HI.